We begin with the raw amino-acid sequence, 149 residues long: MTRKQKRLAVIAGGMGFIATAVLLVLFAFSQSVAYFYMPGDLAKSPIGAGTLIRLGGLVGEGSIVRGEGTQVQFSVTDGSDAIKVRYNGILPDLFREGQGVVTEGKFEPGSDVFVADSVLAKHDERYMPKQVADRLKADGVWKGEEASQ.

Residues 1–7 (MTRKQKR) are Cytoplasmic-facing. Residues 8–28 (LAVIAGGMGFIATAVLLVLFA) form a helical; Signal-anchor for type II membrane protein membrane-spanning segment. Residues 29-149 (FSQSVAYFYM…GVWKGEEASQ (121 aa)) lie on the Periplasmic side of the membrane. Heme contacts are provided by histidine 123 and tyrosine 127.

Belongs to the CcmE/CycJ family.

The protein localises to the cell inner membrane. Heme chaperone required for the biogenesis of c-type cytochromes. Transiently binds heme delivered by CcmC and transfers the heme to apo-cytochromes in a process facilitated by CcmF and CcmH. The protein is Cytochrome c-type biogenesis protein CcmE of Rhizobium rhizogenes (strain K84 / ATCC BAA-868) (Agrobacterium radiobacter).